Consider the following 310-residue polypeptide: Ribosomal RNA small subunit methyltransferase H (310 aa).

S-adenosyl-L-methionine is bound by residues 35–37, Asp52, Phe79, Asp100, and Gln107; that span reads GGH.

The protein belongs to the methyltransferase superfamily. RsmH family.

The protein localises to the cytoplasm. The catalysed reaction is cytidine(1402) in 16S rRNA + S-adenosyl-L-methionine = N(4)-methylcytidine(1402) in 16S rRNA + S-adenosyl-L-homocysteine + H(+). Functionally, specifically methylates the N4 position of cytidine in position 1402 (C1402) of 16S rRNA. The protein is Ribosomal RNA small subunit methyltransferase H of Anaeromyxobacter sp. (strain Fw109-5).